A 320-amino-acid polypeptide reads, in one-letter code: MGDIPAVGLSSWKASPGKVTEAVKEAIDAGYRHFDCAYFYHNEREVGAGIRCKIKEGAVRREDLFIATKLWCTCHKKSLVETACRKSLKALKLNYLDLYLIHWPMGFKPPHPEWIMSCSELSFCLSHPRVQDLPLDESNMVIPSDTDFLDTWEAMEDLVITGLVKNIGVSNFNHEQLERLLNKPGLRFKPLTNQIECHPYLTQKNLISFCQSRDVSVTAYRPLGGSCEGVDLIDNPVIKRIAKEHGKSPAQILIRFQIQRNVIVIPGSITPSHIKENIQVFDFELTQHDMDNILSLNRNLRLAMFPITKNHKDYPFHIEY.

Aspartate 35 contributes to the NADP(+) binding site. The active-site Proton donor is the tyrosine 40. A substrate-binding site is contributed by histidine 102. Residues glutamine 194 and isoleucine 265 to asparagine 277 each bind NADP(+).

This sequence belongs to the aldo/keto reductase family. Monomer. As to expression, specifically expressed in testis. Expressed in testicular germ cells and testis interstitial cells.

It is found in the cytoplasm. It carries out the reaction 1,5-anhydro-D-glucitol + NADP(+) = 1,5-anhydro-D-fructose + NADPH + H(+). Inhibited by p-chloromercuribenzoic acid and alkyliodines. Its function is as follows. Catalyzes the NADPH-dependent reduction of 1,5-anhydro-D-fructose (AF) to 1,5-anhydro-D-glucitol. Has low NADPH-dependent reductase activity towards 9,10-phenanthrenequinone (in vitro). The protein is 1,5-anhydro-D-fructose reductase (AKR1E2) of Homo sapiens (Human).